A 587-amino-acid chain; its full sequence is MNHQYIPSPIYSDQNSGVHNVNKSLHNLNINNGNNNYNYSNNNYNNNINNNNNINNNINNNNNNNNNNNNNNINQYHQNHYDQYSDNNCNNSNSNNINNNNNINNNINNNNINNNNNNINSNNNNNNNNNNNNNNNLLKIPQLNISPNGVGGGNGISNGNGVNKIFSKLDLSKVPNSYQLAHNSSMPNSPTSSNISPSTPTSMALNLSSLKSILDSPPAAPAHSASSSHNNDHRTLNINGNHHNNNNNINNNINNNVNNNINNGNGNGNGNGNNNNNNNIGVNGSGSSNSSSPSIGFSIPLLQLKQIGINNQTSPSQQSQQQQQQQQQQQQSQHNGIPLINTTEIHQRSNPSSATNSPRALYYGNESSVENSPFTTPLSSPRGPISPRATINSSMSNLQSNIRVEEQWKKIEYYVNDLSHFIYESIRNKDYSNLSELKEKIDEVVNTSKEIEIIHSIAKSLPPQTRARKKRSTKAEKLQKDLIGIKRSYVTTPKSKGTYCIFCGTMETPEWRKGPGGHKTLCNACGLHYAKNIKKENQNNGGSPNPQQNNVTTTTTTTTSTSTNSPNSNGNNFSPESAMSVSKLISD.

The span at 53–74 (NINNNINNNNNNNNNNNNNNIN) shows a compositional bias: low complexity. Disordered stretches follow at residues 53-141 (NINN…LKIP), 179-294 (QLAH…SSPS), and 312-392 (QTSP…ATIN). Residues 75-86 (QYHQNHYDQYSD) show a composition bias toward polar residues. 5 stretches are compositionally biased toward low complexity: residues 87–136 (NNCN…NNNN), 183–202 (NSSM…TPTS), 237–264 (NING…INNG), 272–292 (GNNN…NSSS), and 316–333 (SQQS…QQSQ). 2 stretches are compositionally biased toward polar residues: residues 340–358 (INTT…TNSP) and 365–379 (NESS…TPLS). A GATA-type zinc finger spans residues 500-525 (CIFCGTMETPEWRKGPGGHKTLCNAC). Residues 536–587 (ENQNNGGSPNPQQNNVTTTTTTTTSTSTNSPNSNGNNFSPESAMSVSKLISD) form a disordered region. Low complexity predominate over residues 538-575 (QNNGGSPNPQQNNVTTTTTTTTSTSTNSPNSNGNNFSP). A compositionally biased stretch (polar residues) spans 577 to 587 (SAMSVSKLISD).

The sequence is that of GATA zinc finger domain-containing protein 3 (gtaC) from Dictyostelium discoideum (Social amoeba).